The sequence spans 149 residues: Probable ubiquitin-conjugating enzyme E2 12 (149 aa).

Residues 1–15 are compositionally biased toward basic and acidic residues; the sequence is MASKRISRELRDMQR. The segment at 1-22 is disordered; the sequence is MASKRISRELRDMQRHPPANCS. The UBC core domain occupies 1 to 148; sequence MASKRISREL…AQKWTQKYAM (148 aa). Catalysis depends on Cys-86, which acts as the Glycyl thioester intermediate.

It belongs to the ubiquitin-conjugating enzyme family. As to expression, ubiquitously expressed at very low levels.

It carries out the reaction S-ubiquitinyl-[E1 ubiquitin-activating enzyme]-L-cysteine + [E2 ubiquitin-conjugating enzyme]-L-cysteine = [E1 ubiquitin-activating enzyme]-L-cysteine + S-ubiquitinyl-[E2 ubiquitin-conjugating enzyme]-L-cysteine.. It functions in the pathway protein modification; protein ubiquitination. Its function is as follows. Accepts the ubiquitin from the E1 complex and catalyzes its covalent attachment to other proteins. In Arabidopsis thaliana (Mouse-ear cress), this protein is Probable ubiquitin-conjugating enzyme E2 12 (UBC12).